A 174-amino-acid polypeptide reads, in one-letter code: UPF0316 protein LMOf2365_1801 (174 aa).

A run of 3 helical transmembrane segments spans residues 4–24 (GIFIVATIFIVNILYVTIYTV), 36–56 (LAALSSVFEMIIYVVALSLVL), and 62–82 (IANVLAYAIGFGVGIIVGMKI).

The protein belongs to the UPF0316 family.

The protein localises to the cell membrane. This chain is UPF0316 protein LMOf2365_1801, found in Listeria monocytogenes serotype 4b (strain F2365).